Consider the following 432-residue polypeptide: Homogentisate 1,2-dioxygenase (432 aa).

Histidine 287 serves as the catalytic Proton acceptor. Histidine 330 and glutamate 336 together coordinate Fe cation. Residues tyrosine 345 and histidine 366 each coordinate homogentisate. Histidine 366 serves as a coordination point for Fe cation.

The protein belongs to the homogentisate dioxygenase family. As to quaternary structure, hexamer; dimer of trimers. Requires Fe cation as cofactor.

The enzyme catalyses homogentisate + O2 = 4-maleylacetoacetate + H(+). It functions in the pathway amino-acid degradation; L-phenylalanine degradation; acetoacetate and fumarate from L-phenylalanine: step 4/6. Functionally, involved in the catabolism of homogentisate (2,5-dihydroxyphenylacetate or 2,5-OH-PhAc), a central intermediate in the degradation of phenylalanine and tyrosine. Catalyzes the oxidative ring cleavage of the aromatic ring of homogentisate to yield maleylacetoacetate. This is Homogentisate 1,2-dioxygenase from Pseudomonas aeruginosa (strain ATCC 15692 / DSM 22644 / CIP 104116 / JCM 14847 / LMG 12228 / 1C / PRS 101 / PAO1).